The sequence spans 445 residues: Trigger factor (445 aa).

The PPIase FKBP-type domain maps to 162–247; it reads GDQVTIDAIG…IKAVHTAEPT (86 aa).

It belongs to the FKBP-type PPIase family. Tig subfamily.

It localises to the cytoplasm. It carries out the reaction [protein]-peptidylproline (omega=180) = [protein]-peptidylproline (omega=0). Involved in protein export. Acts as a chaperone by maintaining the newly synthesized protein in an open conformation. Functions as a peptidyl-prolyl cis-trans isomerase. In Rickettsia africae (strain ESF-5), this protein is Trigger factor.